The chain runs to 288 residues: ATP synthase gamma chain (288 aa).

The protein belongs to the ATPase gamma chain family. F-type ATPases have 2 components, CF(1) - the catalytic core - and CF(0) - the membrane proton channel. CF(1) has five subunits: alpha(3), beta(3), gamma(1), delta(1), epsilon(1). CF(0) has three main subunits: a, b and c.

Its subcellular location is the cell membrane. Functionally, produces ATP from ADP in the presence of a proton gradient across the membrane. The gamma chain is believed to be important in regulating ATPase activity and the flow of protons through the CF(0) complex. The sequence is that of ATP synthase gamma chain from Shouchella clausii (strain KSM-K16) (Alkalihalobacillus clausii).